A 237-amino-acid chain; its full sequence is Uridylate kinase (237 aa).

10 to 13 (KLSG) is a binding site for ATP. Gly-52 contacts UMP. ATP is bound by residues Gly-53 and Arg-57. Residues Asp-72 and 133-140 (TGNPFFTT) each bind UMP. Positions 160, 166, and 169 each coordinate ATP.

It belongs to the UMP kinase family. As to quaternary structure, homohexamer.

The protein resides in the cytoplasm. The enzyme catalyses UMP + ATP = UDP + ADP. It functions in the pathway pyrimidine metabolism; CTP biosynthesis via de novo pathway; UDP from UMP (UMPK route): step 1/1. Inhibited by UTP. Functionally, catalyzes the reversible phosphorylation of UMP to UDP. In Thiobacillus denitrificans (strain ATCC 25259 / T1), this protein is Uridylate kinase.